Reading from the N-terminus, the 142-residue chain is 3-hydroxyacyl-[acyl-carrier-protein] dehydratase FabZ (142 aa).

The active site involves histidine 41.

This sequence belongs to the thioester dehydratase family. FabZ subfamily.

It localises to the cytoplasm. The enzyme catalyses a (3R)-hydroxyacyl-[ACP] = a (2E)-enoyl-[ACP] + H2O. Its function is as follows. Involved in unsaturated fatty acids biosynthesis. Catalyzes the dehydration of short chain beta-hydroxyacyl-ACPs and long chain saturated and unsaturated beta-hydroxyacyl-ACPs. The polypeptide is 3-hydroxyacyl-[acyl-carrier-protein] dehydratase FabZ (Symbiobacterium thermophilum (strain DSM 24528 / JCM 14929 / IAM 14863 / T)).